The chain runs to 79 residues: Ketoisovalerate oxidoreductase subunit VorC (79 aa).

4Fe-4S ferredoxin-type domains are found at residues 4–33 (AYPVINRVECKACERCIIACPRKVLYMSNK) and 40–70 (HYVEYRGEGCNGCGNCYYTCPEINAIEVHIE). [4Fe-4S] cluster contacts are provided by C13, C16, C19, C23, C49, C52, C55, and C59.

Heterotrimer of the VorA, VorB and VorC subunits. [4Fe-4S] cluster serves as cofactor.

It carries out the reaction 3-methyl-2-oxobutanoate + 2 oxidized [2Fe-2S]-[ferredoxin] + CoA = 2-methylpropanoyl-CoA + 2 reduced [2Fe-2S]-[ferredoxin] + CO2 + H(+). The chain is Ketoisovalerate oxidoreductase subunit VorC (vorC) from Methanothermobacter marburgensis (strain ATCC BAA-927 / DSM 2133 / JCM 14651 / NBRC 100331 / OCM 82 / Marburg) (Methanobacterium thermoautotrophicum).